The chain runs to 308 residues: Acetylglutamate kinase (308 aa).

Substrate is bound by residues 86 to 87 (GG), Arg-108, and Asn-201.

This sequence belongs to the acetylglutamate kinase family. ArgB subfamily.

The protein localises to the cytoplasm. It catalyses the reaction N-acetyl-L-glutamate + ATP = N-acetyl-L-glutamyl 5-phosphate + ADP. It participates in amino-acid biosynthesis; L-arginine biosynthesis; N(2)-acetyl-L-ornithine from L-glutamate: step 2/4. Its function is as follows. Catalyzes the ATP-dependent phosphorylation of N-acetyl-L-glutamate. This Prochlorococcus marinus (strain MIT 9313) protein is Acetylglutamate kinase.